The primary structure comprises 207 residues: Nitrophorin-1 (207 aa).

The first 23 residues, 1-23 (MKSYTALLAVAILCLFAAVGVSG), serve as a signal peptide directing secretion. 2 disulfide bridges follow: C25/C145 and C64/C194. Residue H82 participates in heme binding.

The protein belongs to the calycin superfamily. Nitrophorin family. In terms of tissue distribution, salivary gland (at protein level).

It is found in the secreted. Heme-based protein that deliver nitric oxide gas (NO) to the victim while feeding, resulting in vasodilation and inhibition of platelet aggregation. Reversibly binds nitric oxide (NO). Also binds tightly to histamine, which is released by the host to induce wound healing. This chain is Nitrophorin-1, found in Rhodnius prolixus (Triatomid bug).